The primary structure comprises 103 residues: Protamine-2 (103 aa).

Residues 1 to 103 (MVRYRTRSLS…RTRRRRCRRY (103 aa)) form a disordered region. Phosphoserine occurs at positions 8 and 10. Basic and acidic residues predominate over residues 8 to 17 (SLSERPHEVH). Positions 18-29 (GQQVHGQDQGHN) are enriched in low complexity. Residue S37 is modified to Phosphoserine. Basic and acidic residues predominate over residues 39–48 (EHVEVYERTH). Over residues 49-103 (QGHSHHRRRRCSQRRLHRIHRRRHRSCRRRRRRSCRHRRRHRRGCRTRRRRCRRY) the composition is skewed to basic residues.

This sequence belongs to the protamine P2 family. As to quaternary structure, interacts with TDRP. In terms of processing, proteolytic processing into mature chains is required for histone eviction during spermatogenesis. Transition proteins (TNP1 and TNP2) are required for processing. In terms of tissue distribution, testis.

Its subcellular location is the nucleus. It is found in the chromosome. Protamines substitute for histones in the chromatin of sperm during the haploid phase of spermatogenesis. They compact sperm DNA into a highly condensed, stable and inactive complex. This Erythrocebus patas (Red guenon) protein is Protamine-2 (PRM2).